The primary structure comprises 126 residues: Glycine cleavage system H protein (126 aa).

The Lipoyl-binding domain occupies 22-104; that stretch reads VAYVGITDYA…YGEGWLIKMK (83 aa). Lys-63 carries the N6-lipoyllysine modification.

Belongs to the GcvH family. The glycine cleavage system is composed of four proteins: P, T, L and H. It depends on (R)-lipoate as a cofactor.

Functionally, the glycine cleavage system catalyzes the degradation of glycine. The H protein shuttles the methylamine group of glycine from the P protein to the T protein. This is Glycine cleavage system H protein from Bacteroides fragilis (strain YCH46).